The chain runs to 501 residues: Lysine--tRNA ligase (501 aa).

Mg(2+) is bound by residues E404 and E411.

This sequence belongs to the class-II aminoacyl-tRNA synthetase family. In terms of assembly, homodimer. Requires Mg(2+) as cofactor.

The protein resides in the cytoplasm. The enzyme catalyses tRNA(Lys) + L-lysine + ATP = L-lysyl-tRNA(Lys) + AMP + diphosphate. The chain is Lysine--tRNA ligase (lysS) from Campylobacter jejuni subsp. jejuni serotype O:2 (strain ATCC 700819 / NCTC 11168).